The chain runs to 659 residues: Threonine--tRNA ligase (659 aa).

Residues 1-61 (MIDLIFPDGS…TPDLLGGGNR (61 aa)) enclose the TGS domain. Positions 249-541 (DHRKLGKTMD…LLENYAGHLP (293 aa)) are catalytic. Residues Cys341, His392, and His518 each coordinate Zn(2+). The interval 637–659 (EEATPPDLARDRAVAAPAELAQA) is disordered.

This sequence belongs to the class-II aminoacyl-tRNA synthetase family. Homodimer. Requires Zn(2+) as cofactor.

The protein localises to the cytoplasm. It catalyses the reaction tRNA(Thr) + L-threonine + ATP = L-threonyl-tRNA(Thr) + AMP + diphosphate + H(+). Functionally, catalyzes the attachment of threonine to tRNA(Thr) in a two-step reaction: L-threonine is first activated by ATP to form Thr-AMP and then transferred to the acceptor end of tRNA(Thr). Also edits incorrectly charged L-seryl-tRNA(Thr). The sequence is that of Threonine--tRNA ligase from Caulobacter sp. (strain K31).